A 247-amino-acid chain; its full sequence is Virulence plasmid protein pGP6-D (247 aa).

This sequence belongs to the UPF0137 (pGP6-D) family.

The polypeptide is Virulence plasmid protein pGP6-D (Chlamydia trachomatis).